A 32-amino-acid chain; its full sequence is Peptide II.10.10 (32 aa).

3 disulfide bridges follow: C5–C24, C10–C29, and C14–C31.

The protein belongs to the short scorpion toxin superfamily. Potassium channel inhibitor family. Alpha-KTx 10 subfamily. In terms of tissue distribution, expressed by the venom gland.

Its subcellular location is the secreted. The protein is Peptide II.10.10 of Centruroides tecomanus (Scorpion).